The chain runs to 406 residues: Bifunctional enzyme IspD/IspF (406 aa).

Residues 1-246 (MTQMHSTQPM…KLSAGLLPDV (246 aa)) form a 2-C-methyl-D-erythritol 4-phosphate cytidylyltransferase region. Residues 247–406 (RTGNGYDVHQ…ATVVYRGGRP (160 aa)) form a 2-C-methyl-D-erythritol 2,4-cyclodiphosphate synthase region. Asp-253 and His-255 together coordinate a divalent metal cation. 4-CDP-2-C-methyl-D-erythritol 2-phosphate-binding positions include 253–255 (DVH) and 279–280 (HS). His-287 provides a ligand contact to a divalent metal cation. Residues 301-303 (DIG), 377-380 (TTNE), Phe-384, and Arg-387 each bind 4-CDP-2-C-methyl-D-erythritol 2-phosphate.

In the N-terminal section; belongs to the IspD/TarI cytidylyltransferase family. IspD subfamily. The protein in the C-terminal section; belongs to the IspF family. It depends on a divalent metal cation as a cofactor.

It catalyses the reaction 2-C-methyl-D-erythritol 4-phosphate + CTP + H(+) = 4-CDP-2-C-methyl-D-erythritol + diphosphate. It carries out the reaction 4-CDP-2-C-methyl-D-erythritol 2-phosphate = 2-C-methyl-D-erythritol 2,4-cyclic diphosphate + CMP. The protein operates within isoprenoid biosynthesis; isopentenyl diphosphate biosynthesis via DXP pathway; isopentenyl diphosphate from 1-deoxy-D-xylulose 5-phosphate: step 2/6. It participates in isoprenoid biosynthesis; isopentenyl diphosphate biosynthesis via DXP pathway; isopentenyl diphosphate from 1-deoxy-D-xylulose 5-phosphate: step 4/6. In terms of biological role, bifunctional enzyme that catalyzes the formation of 4-diphosphocytidyl-2-C-methyl-D-erythritol from CTP and 2-C-methyl-D-erythritol 4-phosphate (MEP) (IspD), and catalyzes the conversion of 4-diphosphocytidyl-2-C-methyl-D-erythritol 2-phosphate (CDP-ME2P) to 2-C-methyl-D-erythritol 2,4-cyclodiphosphate (ME-CPP) with a corresponding release of cytidine 5-monophosphate (CMP) (IspF). The polypeptide is Bifunctional enzyme IspD/IspF (Rhizobium rhizogenes (strain K84 / ATCC BAA-868) (Agrobacterium radiobacter)).